A 363-amino-acid chain; its full sequence is U-box domain-containing protein 62 (363 aa).

A disordered region spans residues 74–117; the sequence is KPIIGNPNDSGGSDGEDDVDVEEEDEDDDLDGNEGDIGMNKDAG. Acidic residues predominate over residues 87 to 107; it reads DGEDDVDVEEEDEDDDLDGNE. The region spanning 181 to 253 is the U-box domain; the sequence is SLRTILSDPT…QAFCREENSQ (73 aa). The interval 343–363 is disordered; that stretch reads AKAPEDPSAKATPNKMVSNWL.

The enzyme catalyses S-ubiquitinyl-[E2 ubiquitin-conjugating enzyme]-L-cysteine + [acceptor protein]-L-lysine = [E2 ubiquitin-conjugating enzyme]-L-cysteine + N(6)-ubiquitinyl-[acceptor protein]-L-lysine.. It functions in the pathway protein modification; protein ubiquitination. Its function is as follows. Functions as an E3 ubiquitin ligase. This Arabidopsis thaliana (Mouse-ear cress) protein is U-box domain-containing protein 62 (PUB62).